A 206-amino-acid chain; its full sequence is Proteasome subunit beta 1 (206 aa).

A propeptide spans 1–5 (MLMKG) (removed in mature form; by autocatalysis). The active-site Nucleophile is the Thr6.

It belongs to the peptidase T1B family. In terms of assembly, the 20S proteasome core is composed of 14 alpha and 14 beta subunits that assemble into four stacked heptameric rings, resulting in a barrel-shaped structure. The two inner rings, each composed of seven catalytic beta subunits, are sandwiched by two outer rings, each composed of seven alpha subunits. The catalytic chamber with the active sites is on the inside of the barrel. Has a gated structure, the ends of the cylinder being occluded by the N-termini of the alpha-subunits. Is capped at one or both ends by the proteasome regulatory ATPase, PAN.

The protein resides in the cytoplasm. It catalyses the reaction Cleavage of peptide bonds with very broad specificity.. Its activity is regulated as follows. The formation of the proteasomal ATPase PAN-20S proteasome complex, via the docking of the C-termini of PAN into the intersubunit pockets in the alpha-rings, triggers opening of the gate for substrate entry. Interconversion between the open-gate and close-gate conformations leads to a dynamic regulation of the 20S proteasome proteolysis activity. Functionally, component of the proteasome core, a large protease complex with broad specificity involved in protein degradation. The protein is Proteasome subunit beta 1 of Korarchaeum cryptofilum (strain OPF8).